The primary structure comprises 138 residues: MGTFTYERQVYLADTDGAGVVYFNQFLQMCHEAYESWLSSEHLSLQNIISVGDFALPLVHASIDFFAPAHCGDRLLVNLTITQASAHRFCCDYEISQAESAQLLARAQTHHVCIALPERKKAPLPQPWQTAICDLDHP.

The active site involves Asp-16.

The protein belongs to the 4-hydroxybenzoyl-CoA thioesterase family. DHNA-CoA hydrolase subfamily.

The catalysed reaction is 1,4-dihydroxy-2-naphthoyl-CoA + H2O = 1,4-dihydroxy-2-naphthoate + CoA + H(+). Its pathway is cofactor biosynthesis; phylloquinone biosynthesis. It participates in quinol/quinone metabolism; 1,4-dihydroxy-2-naphthoate biosynthesis; 1,4-dihydroxy-2-naphthoate from chorismate: step 7/7. Catalyzes the specific hydrolysis of 1,4-dihydroxy-2-naphthoyl-CoA (DHNA-CoA) to 1,4-dihydroxy-2-naphthoate (DHNA), a reaction involved in phylloquinone (vitamin K1) biosynthesis. Is not active on benzoyl-CoA, phenylacetyl-CoA and aliphatic acyl-CoA thioesters. This is 1,4-dihydroxy-2-naphthoyl-CoA hydrolase from Synechocystis sp. (strain ATCC 27184 / PCC 6803 / Kazusa).